The chain runs to 198 residues: Probable molybdenum cofactor guanylyltransferase (198 aa).

GTP contacts are provided by residues 11 to 13, Lys-23, Asp-71, and Asp-102; that span reads LAG. Position 102 (Asp-102) interacts with Mg(2+).

It belongs to the MobA family. Mg(2+) is required as a cofactor.

It is found in the cytoplasm. It catalyses the reaction Mo-molybdopterin + GTP + H(+) = Mo-molybdopterin guanine dinucleotide + diphosphate. Its function is as follows. Transfers a GMP moiety from GTP to Mo-molybdopterin (Mo-MPT) cofactor (Moco or molybdenum cofactor) to form Mo-molybdopterin guanine dinucleotide (Mo-MGD) cofactor. This Halalkalibacterium halodurans (strain ATCC BAA-125 / DSM 18197 / FERM 7344 / JCM 9153 / C-125) (Bacillus halodurans) protein is Probable molybdenum cofactor guanylyltransferase.